Consider the following 196-residue polypeptide: Protein GrpE (196 aa).

The segment at 1–39 is disordered; the sequence is MSSKEQKTPEGQAPEEIIMDQHEEIEAVEPEASAEQVDP.

This sequence belongs to the GrpE family. In terms of assembly, homodimer.

It is found in the cytoplasm. Participates actively in the response to hyperosmotic and heat shock by preventing the aggregation of stress-denatured proteins, in association with DnaK and GrpE. It is the nucleotide exchange factor for DnaK and may function as a thermosensor. Unfolded proteins bind initially to DnaJ; upon interaction with the DnaJ-bound protein, DnaK hydrolyzes its bound ATP, resulting in the formation of a stable complex. GrpE releases ADP from DnaK; ATP binding to DnaK triggers the release of the substrate protein, thus completing the reaction cycle. Several rounds of ATP-dependent interactions between DnaJ, DnaK and GrpE are required for fully efficient folding. The protein is Protein GrpE of Escherichia coli (strain SMS-3-5 / SECEC).